The chain runs to 378 residues: Cobalt-precorrin-5B C(1)-methyltransferase (378 aa).

This sequence belongs to the CbiD family.

The enzyme catalyses Co-precorrin-5B + S-adenosyl-L-methionine = Co-precorrin-6A + S-adenosyl-L-homocysteine. It functions in the pathway cofactor biosynthesis; adenosylcobalamin biosynthesis; cob(II)yrinate a,c-diamide from sirohydrochlorin (anaerobic route): step 6/10. Its function is as follows. Catalyzes the methylation of C-1 in cobalt-precorrin-5B to form cobalt-precorrin-6A. In Photorhabdus laumondii subsp. laumondii (strain DSM 15139 / CIP 105565 / TT01) (Photorhabdus luminescens subsp. laumondii), this protein is Cobalt-precorrin-5B C(1)-methyltransferase.